The sequence spans 358 residues: Transmembrane protein 144 homolog B (358 aa).

10 helical membrane passes run valine 6–valine 26, leucine 35–isoleucine 55, isoleucine 60–valine 79, isoleucine 86–lysine 108, proline 122–isoleucine 142, isoleucine 211–methionine 231, leucine 244–valine 264, isoleucine 279–alanine 299, isoleucine 307–tyrosine 327, and leucine 337–serine 357.

It belongs to the TMEM144 family.

Its subcellular location is the membrane. This chain is Transmembrane protein 144 homolog B (tmem144B), found in Dictyostelium discoideum (Social amoeba).